An 881-amino-acid chain; its full sequence is Rho GTPase-activating protein 17 (881 aa).

In terms of domain architecture, BAR spans 14-246; it reads QTVGRAEKTE…MRAHQDKWAE (233 aa). The Rho-GAP domain occupies 252-442; the sequence is TPLEEHLKRS…PIIQHADWFF (191 aa). The span at 459–475 shows a compositional bias: polar residues; it reads TPSSNHSFHTGNDSDSG. The segment at 459–482 is disordered; that stretch reads TPSSNHSFHTGNDSDSGTLERKRP. Phosphoserine occurs at positions 484 and 575. A disordered region spans residues 511-881; sequence GGTLNRKHIS…IDNDTESTAL (371 aa). Residues 592–617 are compositionally biased toward polar residues; sequence RNNSQIASGQNQPQAAAGSHQLSMGQ. Positions 637-650 are enriched in pro residues; it reads APAPPKPGNPPPGH. Low complexity predominate over residues 653–664; that stretch reads GQSSSGTSQHPP. The segment covering 665–678 has biased composition (pro residues); that stretch reads SLSPKPPTRSPSPP. Residues Thr-679 and Thr-682 each carry the phosphothreonine modification. The segment covering 679–698 has biased composition (low complexity); sequence TQHTGQPPGQPSAPSQLSAP. Phosphoserine is present on residues Ser-702 and Ser-704. Composition is skewed to pro residues over residues 712–721, 752–764, and 806–816; these read NHPPPQPPTQ, HTPP…PSTP, and RPSVPPPPQPP. Residues Thr-753, Thr-757, and Thr-759 each carry the phosphothreonine modification. The SH3-binding signature appears at 753 to 766; that stretch reads TPPQTPTPPSTPPL. Position 762 is a phosphoserine (Ser-762). A Phosphothreonine modification is found at Thr-763. Residues 822–844 are compositionally biased toward polar residues; sequence GDSSLTNTAPTASKIVTDSNSRV. The segment covering 845-865 has biased composition (basic and acidic residues); sequence SEPHRSIFPEMHSDSASKDVP. Residues 872–881 show a composition bias toward acidic residues; sequence IDNDTESTAL.

As to quaternary structure, component of a complex whose core is composed of ARHGAP17, AMOT, PALS1, PATJ and PARD3/PAR3. Interacts with NHERF1, FNBP1, TRIP10, CAPZA (CAPZA1, CAPZA2 or CAPZA3), CAPZB, CD2AP and SH3KBP1/CIN85. In terms of tissue distribution, ubiquitously expressed. Expressed at higher level in heart and placenta.

The protein resides in the membrane. It localises to the cytoplasm. The protein localises to the cell junction. It is found in the tight junction. Rho GTPase-activating protein involved in the maintenance of tight junction by regulating the activity of CDC42, thereby playing a central role in apical polarity of epithelial cells. Specifically acts as a GTPase activator for the CDC42 GTPase by converting it to an inactive GDP-bound state. The complex formed with AMOT acts by regulating the uptake of polarity proteins at tight junctions, possibly by deciding whether tight junction transmembrane proteins are recycled back to the plasma membrane or sent elsewhere. Participates in the Ca(2+)-dependent regulation of exocytosis, possibly by catalyzing GTPase activity of Rho family proteins and by inducing the reorganization of the cortical actin filaments. Acts as a GTPase activator in vitro for RAC1. The protein is Rho GTPase-activating protein 17 (ARHGAP17) of Homo sapiens (Human).